The chain runs to 388 residues: MNIHEYQGKEILRKYNVPVPRGIPAFSVDEALKAAEQLGGPVWVVKAQIHAGGRGKGGGVKVAKSMDEVKTYASNILGMQLVTHQTGPEGKKVNRLLIEEGADIKKELYVSLVVDRVSQKIALMASSEGGMDIEEVAAHTPEKIHTLIIEPSTGLTDADADDIARKIGVPDASVAQARQALQGLYKAFYETDASLAEINPLILTGDGKVIALDAKFNFDSNALFRHPEIVAYRDLDEEDANEIEASKFDLAYISLDGNIGCLVNGAGLAMATMDTIKLFGGEPANFLDVGGGATTEKVTEAFKLMLKNPNVQAILVNIFGGIMRCDVIAEGVISASKAVSLNVPLVVRMKGTNEELGRKMLADSGLPIISADTMEEAAQKVVAAAAGK.

Residues 9–244 (KEILRKYNVP…LDEEDANEIE (236 aa)) enclose the ATP-grasp domain. ATP-binding positions include lysine 46, 53-55 (GRG), glutamate 99, alanine 102, and glutamate 107. Mg(2+) is bound by residues asparagine 199 and aspartate 213. Residues asparagine 264 and 321–323 (GIM) each bind substrate.

It belongs to the succinate/malate CoA ligase beta subunit family. Heterotetramer of two alpha and two beta subunits. The cofactor is Mg(2+).

It carries out the reaction succinate + ATP + CoA = succinyl-CoA + ADP + phosphate. It catalyses the reaction GTP + succinate + CoA = succinyl-CoA + GDP + phosphate. The protein operates within carbohydrate metabolism; tricarboxylic acid cycle; succinate from succinyl-CoA (ligase route): step 1/1. In terms of biological role, succinyl-CoA synthetase functions in the citric acid cycle (TCA), coupling the hydrolysis of succinyl-CoA to the synthesis of either ATP or GTP and thus represents the only step of substrate-level phosphorylation in the TCA. The beta subunit provides nucleotide specificity of the enzyme and binds the substrate succinate, while the binding sites for coenzyme A and phosphate are found in the alpha subunit. The sequence is that of Succinate--CoA ligase [ADP-forming] subunit beta from Cupriavidus taiwanensis (strain DSM 17343 / BCRC 17206 / CCUG 44338 / CIP 107171 / LMG 19424 / R1) (Ralstonia taiwanensis (strain LMG 19424)).